Consider the following 254-residue polypeptide: 3-deoxy-manno-octulosonate cytidylyltransferase (254 aa).

This sequence belongs to the KdsB family.

The protein localises to the cytoplasm. The catalysed reaction is 3-deoxy-alpha-D-manno-oct-2-ulosonate + CTP = CMP-3-deoxy-beta-D-manno-octulosonate + diphosphate. The protein operates within nucleotide-sugar biosynthesis; CMP-3-deoxy-D-manno-octulosonate biosynthesis; CMP-3-deoxy-D-manno-octulosonate from 3-deoxy-D-manno-octulosonate and CTP: step 1/1. Its pathway is bacterial outer membrane biogenesis; lipopolysaccharide biosynthesis. Functionally, activates KDO (a required 8-carbon sugar) for incorporation into bacterial lipopolysaccharide in Gram-negative bacteria. The sequence is that of 3-deoxy-manno-octulosonate cytidylyltransferase from Chlamydia felis (strain Fe/C-56) (Chlamydophila felis).